Reading from the N-terminus, the 321-residue chain is D-alanine--D-alanine ligase (321 aa).

Residues 121–315 enclose the ATP-grasp domain; that stretch reads RSWFLTNNIN…FVNLIEEILK (195 aa). 148-199 serves as a coordination point for ATP; the sequence is IKRPYVIKPFTQGSSIGVEVIFEEDDFNFANYDFPYGDEVIIEKYIKGRELQ. Residues E268, E282, and N284 each coordinate Mg(2+).

Belongs to the D-alanine--D-alanine ligase family. Mg(2+) is required as a cofactor. The cofactor is Mn(2+).

The protein localises to the cytoplasm. It catalyses the reaction 2 D-alanine + ATP = D-alanyl-D-alanine + ADP + phosphate + H(+). It functions in the pathway cell wall biogenesis; peptidoglycan biosynthesis. In terms of biological role, cell wall formation. This Rickettsia bellii (strain OSU 85-389) protein is D-alanine--D-alanine ligase.